Reading from the N-terminus, the 1070-residue chain is DNA-directed RNA polymerase subunit beta (1070 aa).

This sequence belongs to the RNA polymerase beta chain family. In plastids the minimal PEP RNA polymerase catalytic core is composed of four subunits: alpha, beta, beta', and beta''. When a (nuclear-encoded) sigma factor is associated with the core the holoenzyme is formed, which can initiate transcription.

It localises to the plastid. Its subcellular location is the chloroplast. It carries out the reaction RNA(n) + a ribonucleoside 5'-triphosphate = RNA(n+1) + diphosphate. In terms of biological role, DNA-dependent RNA polymerase catalyzes the transcription of DNA into RNA using the four ribonucleoside triphosphates as substrates. In Solanum bulbocastanum (Wild potato), this protein is DNA-directed RNA polymerase subunit beta.